A 469-amino-acid chain; its full sequence is uncharacterized protein (469 aa).

3 helical membrane-spanning segments follow: residues Asp-42–Ile-62, Ile-179–Ser-199, and Asn-249–Val-269.

It localises to the cell membrane. This is an uncharacterized protein from Methanocaldococcus jannaschii (strain ATCC 43067 / DSM 2661 / JAL-1 / JCM 10045 / NBRC 100440) (Methanococcus jannaschii).